We begin with the raw amino-acid sequence, 420 residues long: Gamma-glutamyl phosphate reductase (420 aa).

Belongs to the gamma-glutamyl phosphate reductase family.

The protein resides in the cytoplasm. The catalysed reaction is L-glutamate 5-semialdehyde + phosphate + NADP(+) = L-glutamyl 5-phosphate + NADPH + H(+). The protein operates within amino-acid biosynthesis; L-proline biosynthesis; L-glutamate 5-semialdehyde from L-glutamate: step 2/2. Catalyzes the NADPH-dependent reduction of L-glutamate 5-phosphate into L-glutamate 5-semialdehyde and phosphate. The product spontaneously undergoes cyclization to form 1-pyrroline-5-carboxylate. The chain is Gamma-glutamyl phosphate reductase from Cereibacter sphaeroides (strain ATCC 17029 / ATH 2.4.9) (Rhodobacter sphaeroides).